The chain runs to 259 residues: UPF0246 protein PputW619_0896 (259 aa).

Belongs to the UPF0246 family.

This is UPF0246 protein PputW619_0896 from Pseudomonas putida (strain W619).